Reading from the N-terminus, the 213-residue chain is MKAWQRQFIEFAINKQVLKFGEFTLKSGRKSPYFFNAGLFNTGRDLALLGRFYAQALVDSGIDFDLVFGPAYKGIPIATTTVVALADHYDRDVPYCFNRKEAKDHGEGGTLVGSPLQGKIMLVDDVITAGTAIRESMEIIAAHRAKLAGVLISLDRQERGSGAISAIQEVERDYGCKVISIITLNELVAYLAEKPEMADSLIAVRAYRDEFGI.

A 5-phospho-alpha-D-ribose 1-diphosphate-binding site is contributed by K26. 34 to 35 is an orotate binding site; that stretch reads FF. Residues 72–73, R99, K100, K103, H105, and 124–132 each bind 5-phospho-alpha-D-ribose 1-diphosphate; these read YK and DDVITAGTA. Orotate contacts are provided by T128 and R156.

It belongs to the purine/pyrimidine phosphoribosyltransferase family. PyrE subfamily. As to quaternary structure, homodimer. Mg(2+) serves as cofactor.

The catalysed reaction is orotidine 5'-phosphate + diphosphate = orotate + 5-phospho-alpha-D-ribose 1-diphosphate. It participates in pyrimidine metabolism; UMP biosynthesis via de novo pathway; UMP from orotate: step 1/2. Its function is as follows. Catalyzes the transfer of a ribosyl phosphate group from 5-phosphoribose 1-diphosphate to orotate, leading to the formation of orotidine monophosphate (OMP). This chain is Orotate phosphoribosyltransferase, found in Erwinia tasmaniensis (strain DSM 17950 / CFBP 7177 / CIP 109463 / NCPPB 4357 / Et1/99).